We begin with the raw amino-acid sequence, 159 residues long: Nudix hydrolase DR_1025 (159 aa).

The Mg(2+) site is built by M1, R14, and S49. Residue 1–6 participates in ATP binding; sequence MEHDER. The region spanning 11-144 is the Nudix hydrolase domain; that stretch reads VELRAAGVVL…QIRMYQTKLF (134 aa). Position 50-51 (50-51) interacts with ATP; the sequence is GA. Positions 50–71 match the Nudix box motif; that stretch reads GAVEDGENPQDAAVREACEETG. The Mg(2+) site is built by E53 and E65. 87-89 contributes to the ATP binding site; it reads FPD. Position 95 (R95) interacts with Mg(2+).

It belongs to the Nudix hydrolase family. In terms of assembly, homodimer. It depends on Mg(2+) as a cofactor.

It carries out the reaction 8-oxo-dGTP + H2O = 8-oxo-dGDP + phosphate + H(+). It catalyses the reaction 8-oxo-GTP + H2O = 8-oxo-GDP + phosphate + H(+). The catalysed reaction is P(1),P(4)-bis(5'-adenosyl) tetraphosphate + H2O = AMP + ATP + 2 H(+). In terms of biological role, hydrolase that can act as a nucleoside triphosphatase and a dinucleoside polyphosphate pyrophosphatase. The best substrates are 8-oxo-dGTP and 8-oxo-GTP. Other substrates include Ap4A, dGTP and GTP. May be involved in protection from damage caused by radiation. The polypeptide is Nudix hydrolase DR_1025 (Deinococcus radiodurans (strain ATCC 13939 / DSM 20539 / JCM 16871 / CCUG 27074 / LMG 4051 / NBRC 15346 / NCIMB 9279 / VKM B-1422 / R1)).